The sequence spans 237 residues: ADTIVAVELDSYPNTDIGDPSYPHIGIDIKSIRSKSTARWNMQTGKVGTAHISYNSVAKRLTAVVSYSGSSSTTVSYDVDLNNVLPEWVRVGLSATTGLYKETNTILSWSFTSKLKTNSIADANALHFSFHQFTQNPKDLILQGDATTDSDGNLELTKVSSSGSPQGSSVGRALFYAPVHIWESSAVVASFDATFTFLIKSPDSEPADGITFFIANTDTSIPSGSSGRLLGLFPDAN.

Positions 8 and 10 each coordinate Mn(2+). Residues D10, Y12, N14, and D19 each contribute to the Ca(2+) site. A carbohydrate is bound at residue Y12. Residues D19, H24, and S34 each contribute to the Mn(2+) site. A carbohydrate is bound at residue 99 to 100; that stretch reads LY. D208 is a Ca(2+) binding site. An a carbohydrate-binding site is contributed by R228.

This sequence belongs to the leguminous lectin family. In terms of assembly, homotetramer. In terms of processing, the beta and gamma chains are produced by partial proteolytic processing of the lectin alpha chain by an asparaginyl endopeptidase.

Its function is as follows. D-mannose/D-glucose-binding lectin. Also binds derivatives of glucose and mannose such as more complex glycans. In Cymbosema roseum (Dioclea purpurea), this protein is Mannose-specific lectin alpha chain.